The chain runs to 302 residues: Nucleotide-binding protein Bamb_2855 (302 aa).

ATP is bound at residue 8–15; the sequence is GISGSGKS. 57–60 serves as a coordination point for GTP; sequence DARS.

Belongs to the RapZ-like family.

In terms of biological role, displays ATPase and GTPase activities. The chain is Nucleotide-binding protein Bamb_2855 from Burkholderia ambifaria (strain ATCC BAA-244 / DSM 16087 / CCUG 44356 / LMG 19182 / AMMD) (Burkholderia cepacia (strain AMMD)).